The sequence spans 345 residues: Src kinase-associated phosphoprotein 1 (345 aa).

The region spanning 109 to 212 is the PH domain; that stretch reads KIFKQGYLER…WVEQIQFLVK (104 aa). A disordered region spans residues 226–274; sequence ETYDDIESTESSPVVGLTNDSENSLQEDDVYESIPGDEETEESEDENYE. Residues 250 to 272 are compositionally biased toward acidic residues; the sequence is LQEDDVYESIPGDEETEESEDEN. Residues 283 to 344 enclose the SH3 domain; it reads FYGDYYQGLW…PKDYLTLAFD (62 aa).

It belongs to the SKAP family. Homodimer. Post-translationally, phosphorylated on tyrosines.

Its subcellular location is the cytoplasm. The protein resides in the nucleus. It localises to the cell membrane. In terms of biological role, positively regulates T-cell receptor signaling. Required for optimal conjugation between T-cells and antigen-presenting cells. The sequence is that of Src kinase-associated phosphoprotein 1 (skap1) from Xenopus tropicalis (Western clawed frog).